Here is a 460-residue protein sequence, read N- to C-terminus: MLKEYRTITEVAGPLMLVQKVEGVKYGELGEIELANGEIRRCKVLEVDGQNALVQLFESSTGINVATSKVRFLGRSIELPVSMDMLGRVFSGMGKPLDGGPNIIPDKRLDINGLPMNPAARNYPSEFIQTGISAIDGLNTLVRGQKLPIFSGSGLPHAQLAAQIARQAKVLGTDSKFAVVFAAVGITFEEADYFISDFKRTGAIDRTVLFINLANDPAIERISTPRMALTAAEYLAFDKGMHVLVIITDITNYAEALREVSAARKEVPGRRGYPGYLYTDLATIYERAGRRIDSEGSITLIPILTMPEDDKTHPIPDLTGYITEGQIILSRELHRKGVTPPIDVLPSLSRLKDKGIGKGKTREDHADTMNQLFAAYARGKEAKELAVILGDAALSDTDKLYAKFADAFEKEYVSQGFNEDRSIEKTLEIGWKLLSILPRSELKRIRDEYLDKYLPKAAEN.

Belongs to the ATPase alpha/beta chains family.

Its function is as follows. Produces ATP from ADP in the presence of a proton gradient across the membrane. The V-type beta chain is a regulatory subunit. This is V-type ATP synthase beta chain from Acetivibrio thermocellus (strain ATCC 27405 / DSM 1237 / JCM 9322 / NBRC 103400 / NCIMB 10682 / NRRL B-4536 / VPI 7372) (Clostridium thermocellum).